The following is a 459-amino-acid chain: Cysteine--tRNA ligase (459 aa).

C28 contributes to the Zn(2+) binding site. The 'HIGH' region signature appears at 30-40 (VTIYDLCHIGH). C209, H234, and E238 together coordinate Zn(2+). The short motif at 266-270 (KMSKS) is the 'KMSKS' region element. K269 serves as a coordination point for ATP.

It belongs to the class-I aminoacyl-tRNA synthetase family. Monomer. The cofactor is Zn(2+).

The protein localises to the cytoplasm. The catalysed reaction is tRNA(Cys) + L-cysteine + ATP = L-cysteinyl-tRNA(Cys) + AMP + diphosphate. This Shewanella piezotolerans (strain WP3 / JCM 13877) protein is Cysteine--tRNA ligase.